Consider the following 542-residue polypeptide: Hydroxylamine reductase (542 aa).

Residues cysteine 3, cysteine 6, cysteine 15, and cysteine 21 each contribute to the [4Fe-4S] cluster site. Positions 243, 267, 311, 398, 426, 451, 485, and 487 each coordinate hybrid [4Fe-2O-2S] cluster. Residue cysteine 398 is modified to Cysteine persulfide.

The protein belongs to the HCP family. It depends on [4Fe-4S] cluster as a cofactor. Hybrid [4Fe-2O-2S] cluster is required as a cofactor.

It is found in the cytoplasm. The enzyme catalyses A + NH4(+) + H2O = hydroxylamine + AH2 + H(+). Functionally, catalyzes the reduction of hydroxylamine to form NH(3) and H(2)O. The sequence is that of Hydroxylamine reductase from Syntrophobacter fumaroxidans (strain DSM 10017 / MPOB).